Here is a 103-residue protein sequence, read N- to C-terminus: ATP-dependent Clp protease adapter protein ClpS (103 aa).

Belongs to the ClpS family. Binds to the N-terminal domain of the chaperone ClpA.

Involved in the modulation of the specificity of the ClpAP-mediated ATP-dependent protein degradation. This Neisseria meningitidis serogroup A / serotype 4A (strain DSM 15465 / Z2491) protein is ATP-dependent Clp protease adapter protein ClpS.